Consider the following 488-residue polypeptide: 3-octaprenyl-4-hydroxybenzoate carboxy-lyase (488 aa).

N172 is a binding site for Mn(2+). Prenylated FMN-binding positions include 175-177 (IYR), 189-191 (RWL), and 194-195 (RG). E238 contacts Mn(2+). Catalysis depends on D287, which acts as the Proton donor.

The protein belongs to the UbiD family. In terms of assembly, homohexamer. Prenylated FMN is required as a cofactor. Mn(2+) serves as cofactor.

Its subcellular location is the cell membrane. The enzyme catalyses a 4-hydroxy-3-(all-trans-polyprenyl)benzoate + H(+) = a 2-(all-trans-polyprenyl)phenol + CO2. Its pathway is cofactor biosynthesis; ubiquinone biosynthesis. Catalyzes the decarboxylation of 3-octaprenyl-4-hydroxy benzoate to 2-octaprenylphenol, an intermediate step in ubiquinone biosynthesis. This is 3-octaprenyl-4-hydroxybenzoate carboxy-lyase from Pseudomonas savastanoi pv. phaseolicola (strain 1448A / Race 6) (Pseudomonas syringae pv. phaseolicola (strain 1448A / Race 6)).